A 77-amino-acid polypeptide reads, in one-letter code: Small ribosomal subunit protein bS16c (77 aa).

Belongs to the bacterial ribosomal protein bS16 family.

The protein resides in the plastid. It is found in the chloroplast. This Eucalyptus globulus subsp. globulus (Tasmanian blue gum) protein is Small ribosomal subunit protein bS16c.